The sequence spans 529 residues: MTLDNYNIFNDEYLFGMPLSPLPKVLGTFDGIQLAPTLTTPTLTPTTTRSLQEAFFELTNDPGTPYQATFKPPPLGLMPGGNNGNGVTNVPTTTATATVVGVVNPMISQLPYEVNSALQGTDSDNSNASWADAQNNEDQDTTDTSSAHTDSTSYQNGHMAGSSVNGGGANNFTNVLAGINAGRGSTQGSNTNTSNSATPARRGGGRRPNRNTNMSPEEEEKRRIRRERNKQAAARCRKRRVDQTNELTYEVEQLEKKRDGLKKEMETLTDVKNQLEFFLRAHHSSCQKIRTDLLSVTTCNGLIAPVGLPSAGSCDSGSSSHHNNNSNDSSNGTITGLDASLNSTGRSNSPLDLKPQIKDEPLDGGLDSSCLLDQDGPPPSKRFPLPPMSTLMTPTGVSSGSLQTPIASTAPGGFGSAYPITTTKGSMNSPTLNELNKPKERPNTLAVQRPFVPQMHLNLTSNHNKMPGSGPTHIQGVPIQTPTTGFNFDSLMDGGTGLTPVSGPLVPSQNKHPLELPTPTAEPSKLVSL.

Residues 118-134 are compositionally biased toward polar residues; that stretch reads LQGTDSDNSNASWADAQ. Disordered stretches follow at residues 118 to 166 and 180 to 239; these read LQGT…SVNG and NAGR…CRKR. Composition is skewed to low complexity over residues 142–153 and 182–201; these read TDTSSAHTDSTS and GRGS…TPAR. The bZIP domain occupies 219-282; the sequence is EEKRRIRRER…NQLEFFLRAH (64 aa). A basic motif region spans residues 221–240; the sequence is KRRIRRERNKQAAARCRKRR. The segment at 247–275 is leucine-zipper; sequence LTYEVEQLEKKRDGLKKEMETLTDVKNQL. Disordered stretches follow at residues 311-390 and 493-529; these read AGSC…PMST and DGGT…LVSL. Low complexity predominate over residues 315–332; that stretch reads DSGSSSHHNNNSNDSSNG. Residues 340 to 350 are compositionally biased toward polar residues; sequence SLNSTGRSNSP. S349 is subject to Phosphoserine. Positions 363 to 375 are enriched in low complexity; it reads DGGLDSSCLLDQD. The span at 376 to 387 shows a compositional bias: pro residues; it reads GPPPSKRFPLPP.

The protein belongs to the bZIP family. Fos subfamily. In terms of assembly, homodimer. Heterodimer with Jra. The kay-Jra heterodimer binds more stably to the AP-1 site than either of the two proteins alone.

It localises to the nucleus. Developmentally regulated transcription factor AP-1 binds and recognizes the enhancer DNA sequence: 5'-TGA[CG]TCA-3'. May play a role in the function or determination of a particular subset of cells in the developing embryo. Is able to carry out its function either independently of or in conjunction with Jra. The chain is Transcription factor kayak from Drosophila ananassae (Fruit fly).